Reading from the N-terminus, the 485-residue chain is NADH-quinone oxidoreductase subunit N (485 aa).

The next 14 helical transmembrane spans lie at 8–28 (LIAL…MLSI), 35–55 (FLNA…LWFV), 71–91 (GFAM…CTFA), 105–125 (FYLL…ANHL), 127–147 (SLFL…GYAF), 159–179 (YTIL…LVYA), 203–223 (LLAG…LVPF), 235–255 (PAPV…GVVM), 271–291 (VVLA…ALSQ), 297–317 (LLGY…IALQ), 326–346 (VGVY…VVSL), 373–393 (AAVM…LGFI), 408–430 (WWLV…RVAV), and 455–475 (IVVL…QPLI).

The protein belongs to the complex I subunit 2 family. In terms of assembly, NDH-1 is composed of 13 different subunits. Subunits NuoA, H, J, K, L, M, N constitute the membrane sector of the complex.

The protein localises to the cell inner membrane. It catalyses the reaction a quinone + NADH + 5 H(+)(in) = a quinol + NAD(+) + 4 H(+)(out). Functionally, NDH-1 shuttles electrons from NADH, via FMN and iron-sulfur (Fe-S) centers, to quinones in the respiratory chain. The immediate electron acceptor for the enzyme in this species is believed to be ubiquinone. Couples the redox reaction to proton translocation (for every two electrons transferred, four hydrogen ions are translocated across the cytoplasmic membrane), and thus conserves the redox energy in a proton gradient. This chain is NADH-quinone oxidoreductase subunit N, found in Shigella flexneri.